We begin with the raw amino-acid sequence, 293 residues long: Elongation factor Ts (293 aa).

The involved in Mg(2+) ion dislocation from EF-Tu stretch occupies residues 79 to 82; it reads TDFV.

The protein belongs to the EF-Ts family.

It is found in the cytoplasm. Associates with the EF-Tu.GDP complex and induces the exchange of GDP to GTP. It remains bound to the aminoacyl-tRNA.EF-Tu.GTP complex up to the GTP hydrolysis stage on the ribosome. The sequence is that of Elongation factor Ts from Bacillus velezensis (strain DSM 23117 / BGSC 10A6 / LMG 26770 / FZB42) (Bacillus amyloliquefaciens subsp. plantarum).